A 373-amino-acid polypeptide reads, in one-letter code: GTP cyclohydrolase 1 type 2 homolog (373 aa).

5 residues coordinate a divalent metal cation: histidine 67, histidine 68, aspartate 106, histidine 333, and glutamate 336.

This sequence belongs to the GTP cyclohydrolase I type 2/NIF3 family. In terms of assembly, homohexamer.

The protein is GTP cyclohydrolase 1 type 2 homolog of Listeria monocytogenes serovar 1/2a (strain ATCC BAA-679 / EGD-e).